The chain runs to 350 residues: Atypical chemokine receptor 4 (350 aa).

Topologically, residues 1 to 41 (MAVEYNQSTDYYYEENEMNDTHDYSQYEVICIKEEVRKFAK) are extracellular. Residues asparagine 6 and asparagine 19 are each glycosylated (N-linked (GlcNAc...) asparagine). A helical membrane pass occupies residues 42 to 66 (VFLPAFFTIAFIIGLAGNSTVVAIY). The Cytoplasmic segment spans residues 67-79 (AYYKKRRTKTDVY). A helical transmembrane segment spans residues 80–99 (ILNLAVADLFLLFTLPFWAV). Topologically, residues 100-113 (NAVHGWVLGKIMCK) are extracellular. Cysteine 112 and cysteine 184 form a disulfide bridge. The helical transmembrane segment at 114-135 (VTSALYTVNFVSGMQFLACIST) threads the bilayer. Over 136 to 153 (DRYWAVTKAPSQSGVGKP) the chain is Cytoplasmic. A helical transmembrane segment spans residues 154–175 (CWVICFCVWVAAILLSIPQLVF). Residues 176 to 199 (YTVNHKARCVPIFPYHLGTSMKAS) lie on the Extracellular side of the membrane. The helical transmembrane segment at 200–222 (IQILEICIGFIIPFLIMAVCYFI) threads the bilayer. The Cytoplasmic portion of the chain corresponds to 223–241 (TAKTLIKMPNIKKSQPLKV). Residues 242–265 (LFTVVIVFIVTQLPYNIVKFCQAI) form a helical membrane-spanning segment. Residues 266–283 (DIIYSLITDCDMSKRMDV) are Extracellular-facing. The helical transmembrane segment at 284–306 (AIQITESIALFHSCLNPVLYVFM) threads the bilayer. Over 307–350 (GTSFKNYIMKVAKKYGSWRRQRQNVEEIPFESEDATEPTSTFSI) the chain is Cytoplasmic.

This sequence belongs to the G-protein coupled receptor 1 family. Atypical chemokine receptor subfamily. Forms heteromers with CXCR3. Interacts with ARRB1 and ARRB2. Post-translationally, the Ser/Thr residues in the C-terminal cytoplasmic tail may be phosphorylated. In terms of tissue distribution, expressed in circumvallate and fungiform papillae, olfactory epithelium and lung. Lower expression in liver, kidney and tongue epithelium bearing no taste papillae. Very low expression in the cerebral cortex of the brain.

Its subcellular location is the early endosome. It localises to the recycling endosome. The protein resides in the cell membrane. In terms of biological role, atypical chemokine receptor that controls chemokine levels and localization via high-affinity chemokine binding that is uncoupled from classic ligand-driven signal transduction cascades, resulting instead in chemokine sequestration, degradation, or transcytosis. Also known as interceptor (internalizing receptor) or chemokine-scavenging receptor or chemokine decoy receptor. Acts as a receptor for chemokines CCL2, CCL8, CCL13, CCL19, CCL21 and CCL25. Chemokine-binding does not activate G-protein-mediated signal transduction but instead induces beta-arrestin recruitment, leading to ligand internalization. Plays an important role in controlling the migration of immune and cancer cells that express chemokine receptors CCR7 and CCR9, by reducing the availability of CCL19, CCL21, and CCL25 through internalization. Negatively regulates CXCR3-induced chemotaxis. Regulates T-cell development in the thymus. The protein is Atypical chemokine receptor 4 (ACKR4) of Bos taurus (Bovine).